The following is a 527-amino-acid chain: Mitochondrial substrate carrier family protein V (527 aa).

Basic and acidic residues predominate over residues 1 to 14; that stretch reads MNSSDFKKSFKEST. The disordered stretch occupies residues 1–29; it reads MNSSDFKKSFKESTENNSNTYRPSKTLNT. Residues 1–132 lie on the Mitochondrial intermembrane side of the membrane; the sequence is MNSSDFKKSF…VSKKSISKEN (132 aa). Positions 15–29 are enriched in polar residues; the sequence is ENNSNTYRPSKTLNT. Solcar repeat units follow at residues 130–220, 253–345, and 430–519; these read KENV…CKKH, MTVP…FKII, and VNMI…CKDL. A helical transmembrane segment spans residues 133–153; sequence VNYLVSGSIAGAISRSATAGF. Residues 154–187 are Mitochondrial matrix-facing; it reads ERLTIIQQVQGMSQNLSQGYVGCIAAMKEMVKRE. A helical transmembrane segment spans residues 188–208; the sequence is GFKSIWKGNGANIVKVSPNSG. The Mitochondrial intermembrane segment spans residues 209-258; it reads IRFLTYEFCKKHFLDNSSNHPSSSSIENGIDGNGVGCGSGSEMKMTVPQT. The chain crosses the membrane as a helical span at residues 259 to 279; that stretch reads MFSGAMAGLTSTFFTYPLDVV. The Mitochondrial matrix portion of the chain corresponds to 280–324; the sequence is RIRLSLQGSCSNDYAAHRYNGITHSFFKIHKDEGVKGLYKGLGTS. Residues 325–345 traverse the membrane as a helical segment; sequence IASIVPWVSISFATYEGFKII. Residues 346-435 lie on the Mitochondrial intermembrane side of the membrane; it reads CKKMILNYQI…LKKGVNMICD (90 aa). The chain crosses the membrane as a helical span at residues 436 to 456; the sequence is FVCGALSGAVTMTVCYPLDVL. Residues 457 to 487 lie on the Mitochondrial matrix side of the membrane; sequence RRRMMIQGIGGNKVLYKNGWDATKKILSNEG. Residues 488-508 form a helical membrane-spanning segment; that stretch reads LVAFYHGIIPAYFKVVPTVAI. Residues 509–527 are Mitochondrial intermembrane-facing; sequence SFAVYEICKDLGSNKYQQK.

The protein belongs to the mitochondrial carrier (TC 2.A.29) family.

It localises to the mitochondrion inner membrane. Mitochondrial solute carriers shuttle metabolites, nucleotides, and cofactors through the mitochondrial inner membrane. The chain is Mitochondrial substrate carrier family protein V (mcfV) from Dictyostelium discoideum (Social amoeba).